An 863-amino-acid chain; its full sequence is Leucine--tRNA ligase (863 aa).

The 'HIGH' region motif lies at 42–52 (PYPSGRLHMGH). The 'KMSKS' region motif lies at 622-626 (KMSKS). K625 serves as a coordination point for ATP.

It belongs to the class-I aminoacyl-tRNA synthetase family.

It is found in the cytoplasm. The enzyme catalyses tRNA(Leu) + L-leucine + ATP = L-leucyl-tRNA(Leu) + AMP + diphosphate. This Shewanella loihica (strain ATCC BAA-1088 / PV-4) protein is Leucine--tRNA ligase.